A 255-amino-acid polypeptide reads, in one-letter code: Enolase-phosphatase E1 (255 aa).

2 residues coordinate Mg(2+): Asp22 and Glu24. Substrate contacts are provided by residues 136–137 and Lys173; that span reads SS. Asp199 lines the Mg(2+) pocket.

This sequence belongs to the HAD-like hydrolase superfamily. MasA/MtnC family. Monomer. Requires Mg(2+) as cofactor.

It localises to the cytoplasm. It is found in the nucleus. The enzyme catalyses 5-methylsulfanyl-2,3-dioxopentyl phosphate + H2O = 1,2-dihydroxy-5-(methylsulfanyl)pent-1-en-3-one + phosphate. Its pathway is amino-acid biosynthesis; L-methionine biosynthesis via salvage pathway; L-methionine from S-methyl-5-thio-alpha-D-ribose 1-phosphate: step 3/6. It functions in the pathway amino-acid biosynthesis; L-methionine biosynthesis via salvage pathway; L-methionine from S-methyl-5-thio-alpha-D-ribose 1-phosphate: step 4/6. Its function is as follows. Bifunctional enzyme that catalyzes the enolization of 2,3-diketo-5-methylthiopentyl-1-phosphate (DK-MTP-1-P) into the intermediate 2-hydroxy-3-keto-5-methylthiopentenyl-1-phosphate (HK-MTPenyl-1-P), which is then dephosphorylated to form the acireductone 1,2-dihydroxy-3-keto-5-methylthiopentene (DHK-MTPene). In Verticillium alfalfae (strain VaMs.102 / ATCC MYA-4576 / FGSC 10136) (Verticillium wilt of alfalfa), this protein is Enolase-phosphatase E1.